The following is a 157-amino-acid chain: AM-toxin biosynthesis protein 15 (157 aa).

Residues 17–43 form a disordered region; sequence RARHWDSKQGSSNSDVASGGSEVAGNS.

The protein operates within mycotoxin biosynthesis. Functionally, part of the gene clusters that mediate the biosynthesis of AM-toxins, host-selective toxins (HSTs) causing Alternaria blotch on apple, a worldwide distributed disease. AM-toxins are cyclic depsipeptides containing the 3 residues 2-hydroxy-isovaleric acid (2-HIV), dehydroalanine, L-alanine which are common for all 3 AM-toxins I to III. The fourth precursor is L-alpha-amino-methoxyphenyl-valeric acid (L-Amv) for AM-toxin I, L-alpha-amino-phenyl-valeric acid (L-Apv) for AM-toxin II, and L-alpha-amino-hydroxyphenyl-valeric acid (L-Ahv) for AM-toxin III. AM-toxins have two target sites for affecting susceptible apple cells; they cause invagination of the plasma membrane and electrolyte loss and chloroplast disorganization. The non-ribosomal peptide synthetase AMT1 contains 4 catalytic modules and is responsible for activation of each residue in AM-toxin. The aldo-keto reductase AMT2 catalyzes the conversion of 2-keto-isovaleric acid (2-KIV) to 2-hydroxy-isovaleric acid (2-HIV), one of the precursor residues incorporated by AMT1 during AM-toxin biosynthesis, by reduction of its ketone to an alcohol. The cytochrome P450 monooxygenase AMT3 and the thioesterase AMT4 are also important for AM-toxin production, but their exact function within the AM-toxin biosynthesis are not known yet. Up to 21 proteins (including AMT1 to AMT4) are predicted to be involved in AM-toxin biosynthesis since their expression ishighly up-regulated in AM-toxin-producing cultures. The protein is AM-toxin biosynthesis protein 15 of Alternaria alternata (Alternaria rot fungus).